Consider the following 359-residue polypeptide: Fructose-bisphosphate aldolase (359 aa).

D-glyceraldehyde 3-phosphate is bound at residue S50. D83 (proton donor) is an active-site residue. 4 residues coordinate Zn(2+): H84, D105, E142, and H198. G199 is a binding site for dihydroxyacetone phosphate. H232 lines the Zn(2+) pocket. Residues 233–235 (GSS) and 275–278 (NIDT) each bind dihydroxyacetone phosphate.

It belongs to the class II fructose-bisphosphate aldolase family. It depends on Zn(2+) as a cofactor.

It carries out the reaction beta-D-fructose 1,6-bisphosphate = D-glyceraldehyde 3-phosphate + dihydroxyacetone phosphate. The protein operates within carbohydrate degradation; glycolysis; D-glyceraldehyde 3-phosphate and glycerone phosphate from D-glucose: step 4/4. Catalyzes the aldol condensation of dihydroxyacetone phosphate (DHAP or glycerone-phosphate) with glyceraldehyde 3-phosphate (G3P) to form fructose 1,6-bisphosphate (FBP) in gluconeogenesis and the reverse reaction in glycolysis. The chain is Fructose-bisphosphate aldolase (fba) from Nostoc commune.